The chain runs to 222 residues: 2-C-methyl-D-erythritol 4-phosphate cytidylyltransferase (222 aa).

Belongs to the IspD/TarI cytidylyltransferase family. IspD subfamily.

It carries out the reaction 2-C-methyl-D-erythritol 4-phosphate + CTP + H(+) = 4-CDP-2-C-methyl-D-erythritol + diphosphate. It participates in isoprenoid biosynthesis; isopentenyl diphosphate biosynthesis via DXP pathway; isopentenyl diphosphate from 1-deoxy-D-xylulose 5-phosphate: step 2/6. Its function is as follows. Catalyzes the formation of 4-diphosphocytidyl-2-C-methyl-D-erythritol from CTP and 2-C-methyl-D-erythritol 4-phosphate (MEP). The protein is 2-C-methyl-D-erythritol 4-phosphate cytidylyltransferase of Porphyromonas gingivalis (strain ATCC 33277 / DSM 20709 / CIP 103683 / JCM 12257 / NCTC 11834 / 2561).